The sequence spans 319 residues: uncharacterized protein (319 aa).

The helical transmembrane segment at 270-290 (AAALWWIPAWLAMIVEVAVLG) threads the bilayer.

The protein resides in the membrane. This is an uncharacterized protein from Mycobacterium tuberculosis (strain CDC 1551 / Oshkosh).